The following is a 171-amino-acid chain: Plastocyanin minor isoform, chloroplastic (171 aa).

Residues 73–171 form the Plastocyanin-like domain; sequence MEVLLGSDDG…AGMVGKLTVK (99 aa). Residues His-109, Cys-156, His-159, and Met-164 each contribute to the Cu cation site.

The protein belongs to the plastocyanin family. The cofactor is Cu(2+).

It localises to the plastid. It is found in the chloroplast thylakoid membrane. Participates in electron transfer between P700 and the cytochrome b6-f complex in photosystem I. Seems to be a minor plastocyanin in Arabidopsis. The chain is Plastocyanin minor isoform, chloroplastic (PETE) from Arabidopsis thaliana (Mouse-ear cress).